The following is a 587-amino-acid chain: Adenine deaminase (587 aa).

The protein belongs to the metallo-dependent hydrolases superfamily. Adenine deaminase family. Mn(2+) serves as cofactor.

The enzyme catalyses adenine + H2O + H(+) = hypoxanthine + NH4(+). The polypeptide is Adenine deaminase (Shewanella halifaxensis (strain HAW-EB4)).